The primary structure comprises 151 residues: UPF0178 protein Suden_0449 (151 aa).

The protein belongs to the UPF0178 family.

The sequence is that of UPF0178 protein Suden_0449 from Sulfurimonas denitrificans (strain ATCC 33889 / DSM 1251) (Thiomicrospira denitrificans (strain ATCC 33889 / DSM 1251)).